A 232-amino-acid polypeptide reads, in one-letter code: Large ribosomal subunit protein uL1 (232 aa).

It belongs to the universal ribosomal protein uL1 family. Part of the 50S ribosomal subunit.

Binds directly to 23S rRNA. The L1 stalk is quite mobile in the ribosome, and is involved in E site tRNA release. Its function is as follows. Protein L1 is also a translational repressor protein, it controls the translation of the L11 operon by binding to its mRNA. This Alkaliphilus oremlandii (strain OhILAs) (Clostridium oremlandii (strain OhILAs)) protein is Large ribosomal subunit protein uL1.